The chain runs to 130 residues: Small ribosomal subunit protein uS8 (130 aa).

Belongs to the universal ribosomal protein uS8 family. In terms of assembly, part of the 30S ribosomal subunit. Contacts proteins S5 and S12.

One of the primary rRNA binding proteins, it binds directly to 16S rRNA central domain where it helps coordinate assembly of the platform of the 30S subunit. The sequence is that of Small ribosomal subunit protein uS8 from Pseudoalteromonas atlantica (strain T6c / ATCC BAA-1087).